Reading from the N-terminus, the 188-residue chain is 3-hydroxyanthranilate 3,4-dioxygenase 2 (188 aa).

Residue Arg46 coordinates O2. His50, Glu70, and His108 together coordinate Fe cation. Residue Glu70 coordinates substrate. Residues Arg112 and Glu122 each coordinate substrate.

It belongs to the 3-HAO family. Fe(2+) serves as cofactor.

Its subcellular location is the cytoplasm. It carries out the reaction 3-hydroxyanthranilate + O2 = (2Z,4Z)-2-amino-3-carboxymuconate 6-semialdehyde. Its pathway is cofactor biosynthesis; NAD(+) biosynthesis; quinolinate from L-kynurenine: step 3/3. Its function is as follows. Catalyzes the oxidative ring opening of 3-hydroxyanthranilate to 2-amino-3-carboxymuconate semialdehyde, which spontaneously cyclizes to quinolinate. This Aspergillus fumigatus (strain CBS 144.89 / FGSC A1163 / CEA10) (Neosartorya fumigata) protein is 3-hydroxyanthranilate 3,4-dioxygenase 2 (bna1-2).